A 523-amino-acid chain; its full sequence is Cytochrome P450 52A3-A (523 aa).

A helical transmembrane segment spans residues 17–34; the sequence is WYTILFGAAVTYFLSIAL. Cys-471 is a heme binding site.

This sequence belongs to the cytochrome P450 family. Heme serves as cofactor.

Its subcellular location is the membrane. Together with an NADPH cytochrome P450 the enzyme system catalyzes the terminal hydroxylation as the first step in the assimilation of alkanes and fatty acids. The sequence is that of Cytochrome P450 52A3-A (CYP52A3-A) from Candida maltosa (Yeast).